The sequence spans 202 residues: Glycerol-3-phosphate acyltransferase (202 aa).

Transmembrane regions (helical) follow at residues 11–31 (LLLF…GMVI), 60–80 (AAAA…VLLA), 88–108 (AAQL…WLGF), 117–137 (FLGL…LTWL), and 162–182 (LLLG…VILW).

It belongs to the PlsY family. In terms of assembly, probably interacts with PlsX.

It is found in the cell inner membrane. It catalyses the reaction an acyl phosphate + sn-glycerol 3-phosphate = a 1-acyl-sn-glycero-3-phosphate + phosphate. It participates in lipid metabolism; phospholipid metabolism. Catalyzes the transfer of an acyl group from acyl-phosphate (acyl-PO(4)) to glycerol-3-phosphate (G3P) to form lysophosphatidic acid (LPA). This enzyme utilizes acyl-phosphate as fatty acyl donor, but not acyl-CoA or acyl-ACP. The protein is Glycerol-3-phosphate acyltransferase of Ruegeria sp. (strain TM1040) (Silicibacter sp.).